The following is a 396-amino-acid chain: Jacalin-related lectin 45 (396 aa).

Jacalin-type lectin domains lie at 3–138 (KKVT…KTSH), 144–264 (QFRM…NFAV), and 270–392 (VKKL…YVKP).

This sequence belongs to the jacalin lectin family.

This chain is Jacalin-related lectin 45 (JAL45), found in Arabidopsis thaliana (Mouse-ear cress).